The sequence spans 954 residues: Glucosidase 2 subunit alpha (954 aa).

The signal sequence occupies residues 1-22 (MVLLKWLVCQLVFFTAFSHAFT). N114, N126, N142, N173, and N345 each carry an N-linked (GlcNAc...) asparagine glycan. The active-site Nucleophile is D537. E540 is an active-site residue. Residue D614 is the Proton donor of the active site. N783, N791, N867, N880, N907, and N941 each carry an N-linked (GlcNAc...) asparagine glycan.

It belongs to the glycosyl hydrolase 31 family. As to quaternary structure, heterodimer of a catalytic subunit alpha (ROT2) and a subunit beta (GTB1).

The protein localises to the endoplasmic reticulum. The catalysed reaction is N(4)-(alpha-D-Glc-(1-&gt;3)-alpha-D-Man-(1-&gt;2)-alpha-D-Man-(1-&gt;2)-alpha-D-Man-(1-&gt;3)-[alpha-D-Man-(1-&gt;2)-alpha-D-Man-(1-&gt;3)-[alpha-D-Man-(1-&gt;2)-alpha-D-Man-(1-&gt;6)]-alpha-D-Man-(1-&gt;6)]-beta-D-Man-(1-&gt;4)-beta-D-GlcNAc-(1-&gt;4)-beta-D-GlcNAc)-L-asparaginyl-[protein] + H2O = N(4)-(alpha-D-Man-(1-&gt;2)-alpha-D-Man-(1-&gt;2)-alpha-D-Man-(1-&gt;3)-[alpha-D-Man-(1-&gt;2)-alpha-D-Man-(1-&gt;3)-[alpha-D-Man-(1-&gt;2)-alpha-D-Man-(1-&gt;6)]-alpha-D-Man-(1-&gt;6)]-beta-D-Man-(1-&gt;4)-beta-D-GlcNAc-(1-&gt;4)-beta-D-GlcNAc)-L-asparaginyl-[protein] (N-glucan mannose isomer 9A1,2,3B1,2,3) + beta-D-glucose. It carries out the reaction N(4)-(alpha-D-Glc-(1-&gt;3)-alpha-D-Glc-(1-&gt;3)-alpha-D-Man-(1-&gt;2)-alpha-D-Man-(1-&gt;2)-alpha-D-Man-(1-&gt;3)-[alpha-D-Man-(1-&gt;2)-alpha-D-Man-(1-&gt;3)-[alpha-D-Man-(1-&gt;2)-alpha-D-Man-(1-&gt;6)]-alpha-D-Man-(1-&gt;6)]-beta-D-Man-(1-&gt;4)-beta-D-GlcNAc-(1-&gt;4)-beta-D-GlcNAc)-L-asparaginyl-[protein] + H2O = N(4)-(alpha-D-Glc-(1-&gt;3)-alpha-D-Man-(1-&gt;2)-alpha-D-Man-(1-&gt;2)-alpha-D-Man-(1-&gt;3)-[alpha-D-Man-(1-&gt;2)-alpha-D-Man-(1-&gt;3)-[alpha-D-Man-(1-&gt;2)-alpha-D-Man-(1-&gt;6)]-alpha-D-Man-(1-&gt;6)]-beta-D-Man-(1-&gt;4)-beta-D-GlcNAc-(1-&gt;4)-beta-D-GlcNAc)-L-asparaginyl-[protein] + beta-D-glucose. It functions in the pathway glycan metabolism; N-glycan metabolism. Inhibited by glucose, maltose and nigerose, and by the antibiotic deoxynojirimycin. Its function is as follows. Catalytic subunit of glucosidase 2, which cleaves sequentially the 2 innermost alpha-1,3-linked glucose residues from the Glc(2)Man(9)GlcNAc(2) oligosaccharide precursor of immature glycoproteins. The sequence is that of Glucosidase 2 subunit alpha (ROT2) from Saccharomyces cerevisiae (strain ATCC 204508 / S288c) (Baker's yeast).